The sequence spans 455 residues: Ribulose bisphosphate carboxylase large chain (455 aa).

Residue Lys-5 is modified to N6,N6,N6-trimethyllysine. Substrate contacts are provided by Asn-114 and Thr-164. Lys-166 acts as the Proton acceptor in catalysis. Lys-168 serves as a coordination point for substrate. Lys-192, Asp-194, and Glu-195 together coordinate Mg(2+). Lys-192 bears the N6-carboxylysine mark. Residue His-285 is the Proton acceptor of the active site. Residues Arg-286, His-318, and Ser-370 each contribute to the substrate site.

It belongs to the RuBisCO large chain family. Type I subfamily. Heterohexadecamer of 8 large chains and 8 small chains; disulfide-linked. The disulfide link is formed within the large subunit homodimers. It depends on Mg(2+) as a cofactor. In terms of processing, the disulfide bond which can form in the large chain dimeric partners within the hexadecamer appears to be associated with oxidative stress and protein turnover.

It is found in the plastid. The protein localises to the chloroplast. It carries out the reaction 2 (2R)-3-phosphoglycerate + 2 H(+) = D-ribulose 1,5-bisphosphate + CO2 + H2O. It catalyses the reaction D-ribulose 1,5-bisphosphate + O2 = 2-phosphoglycolate + (2R)-3-phosphoglycerate + 2 H(+). Functionally, ruBisCO catalyzes two reactions: the carboxylation of D-ribulose 1,5-bisphosphate, the primary event in carbon dioxide fixation, as well as the oxidative fragmentation of the pentose substrate in the photorespiration process. Both reactions occur simultaneously and in competition at the same active site. This is Ribulose bisphosphate carboxylase large chain from Erythrina crista-galli (Cockspur coral tree).